Consider the following 1140-residue polypeptide: Eukaryotic translation initiation factor 3 subunit A (1140 aa).

One can recognise a PCI domain in the interval Leu319 to Thr501. Basic and acidic residues-rich tracts occupy residues Gln588–Glu623 and Ala829–Asp899. Disordered stretches follow at residues Gln588 to Glu630 and Ala829 to Arg1140. Ser908 is modified (phosphoserine). 4 stretches are compositionally biased toward basic and acidic residues: residues Glu920–Ser976, Ser990–Arg1051, Asp1059–Gln1086, and Thr1109–Asp1130.

The protein belongs to the eIF-3 subunit A family. In terms of assembly, component of the eukaryotic translation initiation factor 3 (eIF-3) complex. The eIF-3 complex interacts with pix.

It is found in the cytoplasm. Its function is as follows. RNA-binding component of the eukaryotic translation initiation factor 3 (eIF-3) complex, which is involved in protein synthesis of a specialized repertoire of mRNAs and, together with other initiation factors, stimulates binding of mRNA and methionyl-tRNAi to the 40S ribosome. The eIF-3 complex specifically targets and initiates translation of a subset of mRNAs involved in cell proliferation. The polypeptide is Eukaryotic translation initiation factor 3 subunit A (Drosophila melanogaster (Fruit fly)).